Reading from the N-terminus, the 322-residue chain is ATP-dependent 6-phosphofructokinase (322 aa).

Residue G12 coordinates ATP. R22–K26 contacts ADP. Residues R73–S74 and G103–S106 each bind ATP. D104 contacts Mg(2+). Substrate is bound at residue T127 to D129. Catalysis depends on D129, which acts as the Proton acceptor. R156 lines the ADP pocket. Substrate contacts are provided by residues R164 and M171–R173. ADP contacts are provided by residues G187–D189 and K215–H217. Substrate is bound by residues E224, R245, and H251–R254.

This sequence belongs to the phosphofructokinase type A (PFKA) family. ATP-dependent PFK group I subfamily. Prokaryotic clade 'B1' sub-subfamily. In terms of assembly, homotetramer. Requires Mg(2+) as cofactor.

Its subcellular location is the cytoplasm. It catalyses the reaction beta-D-fructose 6-phosphate + ATP = beta-D-fructose 1,6-bisphosphate + ADP + H(+). Its pathway is carbohydrate degradation; glycolysis; D-glyceraldehyde 3-phosphate and glycerone phosphate from D-glucose: step 3/4. With respect to regulation, allosterically activated by ADP and other diphosphonucleosides, and allosterically inhibited by phosphoenolpyruvate. Its function is as follows. Catalyzes the phosphorylation of D-fructose 6-phosphate to fructose 1,6-bisphosphate by ATP, the first committing step of glycolysis. This is ATP-dependent 6-phosphofructokinase from Fusobacterium nucleatum subsp. nucleatum (strain ATCC 25586 / DSM 15643 / BCRC 10681 / CIP 101130 / JCM 8532 / KCTC 2640 / LMG 13131 / VPI 4355).